A 405-amino-acid polypeptide reads, in one-letter code: Cysteine desulfurase IscS (405 aa).

Residues 75 to 76 (AT), N156, Q184, and 204 to 206 (SAH) each bind pyridoxal 5'-phosphate. Residue K207 is modified to N6-(pyridoxal phosphate)lysine. T244 serves as a coordination point for pyridoxal 5'-phosphate. Residue C329 is the Cysteine persulfide intermediate of the active site. C329 contributes to the [2Fe-2S] cluster binding site.

This sequence belongs to the class-V pyridoxal-phosphate-dependent aminotransferase family. NifS/IscS subfamily. Homodimer. Forms a heterotetramer with IscU, interacts with other sulfur acceptors. The cofactor is pyridoxal 5'-phosphate.

Its subcellular location is the cytoplasm. It catalyses the reaction (sulfur carrier)-H + L-cysteine = (sulfur carrier)-SH + L-alanine. The protein operates within cofactor biosynthesis; iron-sulfur cluster biosynthesis. Functionally, master enzyme that delivers sulfur to a number of partners involved in Fe-S cluster assembly, tRNA modification or cofactor biosynthesis. Catalyzes the removal of elemental sulfur atoms from cysteine to produce alanine. Functions as a sulfur delivery protein for Fe-S cluster synthesis onto IscU, an Fe-S scaffold assembly protein, as well as other S acceptor proteins. This chain is Cysteine desulfurase IscS, found in Methylobacillus flagellatus (strain ATCC 51484 / DSM 6875 / VKM B-1610 / KT).